A 153-amino-acid chain; its full sequence is Large ribosomal subunit protein uL15 (153 aa).

Residues 15 to 42 (ARRIVGRGSSSGRGTTSGRGTKGQQARA) are disordered. The segment covering 23 to 35 (SSSGRGTTSGRGT) has biased composition (gly residues).

Belongs to the universal ribosomal protein uL15 family. Part of the 50S ribosomal subunit.

Its function is as follows. Binds to the 23S rRNA. This Treponema pallidum (strain Nichols) protein is Large ribosomal subunit protein uL15.